Here is a 379-residue protein sequence, read N- to C-terminus: Mannitol-1-phosphate 5-dehydrogenase (379 aa).

Residue 3 to 14 coordinates NAD(+); that stretch reads AVHFGAGNIGRG.

The protein belongs to the mannitol dehydrogenase family.

The enzyme catalyses D-mannitol 1-phosphate + NAD(+) = beta-D-fructose 6-phosphate + NADH + H(+). The protein is Mannitol-1-phosphate 5-dehydrogenase of Anoxybacillus flavithermus (strain DSM 21510 / WK1).